A 310-amino-acid chain; its full sequence is Fucose-specific lectin (310 aa).

6 consecutive repeat copies span residues 1-53 (MSTP…KNVI), 54-103 (AKAK…AGAK), 104-151 (FTVA…EGTN), 152-209 (LGVA…FDKA), 210-256 (PPRC…DKRT), and 257-310 (ITPV…PPAE). The tract at residues 1-310 (MSTPGAQEVL…LGRRALPPAE (310 aa)) is 6 X approximate tandem repeats. 16 residues coordinate beta-L-fucose: Arg25, Glu37, Trp44, Arg73, Glu85, Trp94, Arg126, Glu138, Trp146, Arg177, Gln189, Trp198, Arg230, Gln242, Arg277, and Glu291.

It belongs to the fungal fucose-specific lectin family.

Its function is as follows. Lectin that specifically binds to L-fucose and weakly reacts with mannose and N-acetyl-neuraminic acid. Has strongest preference for the alpha-1,6-fucosylated chain (core fucose) on glycoproteins among alpha-1,2-, alpha-1,3-, alpha-1,4-, and alpha-1,6-fucosylated chains. Binds to fucose residues of IgE in mice and human, causing antigen-independent IgE-mediated mast cell activation and anaphylactoid reactions in mice and is possibly implicated in allergic response to Aspergillus oryzae in humans. Induces secretion of pro-inflammatory cytokines IL6 and IL8 implicated in ocular diseases such as mycotic keratitis, probably through its interaction with host toll-like receptors TLR2 and TLR4, followed by up-regulation of pro-inflammatory cytokines. The chain is Fucose-specific lectin from Aspergillus oryzae (Yellow koji mold).